Reading from the N-terminus, the 369-residue chain is Cytochrome P450 monooxygenase apf8 (369 aa).

C303 is a heme binding site.

Belongs to the cytochrome P450 family. Heme is required as a cofactor.

The protein operates within secondary metabolite biosynthesis. Its function is as follows. Cytochrome P450 monooxygenase; part of the gene cluster that mediates the biosynthesis of the cyclic tetrapeptide apicidin F (APF). The non-ribosomal peptide synthetase apf1 incorporates four different amino acids to produce apicidin F: L-phenylalanine, D-pipecolic acid (D-pip), N-methoxy-L-tryptophan and L-2-aminooctanedioic acid. L-Phenylalanine is the only proteinogenic amino acid directly used by apf1. The 3 other apf1 substrates are non-proteinogenic and have to be modified by other enzymes of the cluster. Lysine is converted to delta-1-pyrroline-5-carboxylate (P5C) which is reduced to L-pipecolic acid (L-pip) by apf3. L-pip is epimerized to D-pip, probably by apf1 activity, prior to incorporation. L-Tryptophan is N-oxidyzed by one of the cytochrome P450 monooxygenases (apf7 or apf8), and further methylated at the hydroxy group by the O-methyltransferase apf6 to yield N-methoxy-L-tryptophan. The synthesis of the fourth apf1 substrate is more complex. The fatty acid synthase apf5 is involved in the synthesis of the octanoic acid backbone of L-2-aminooctanedioic acid by fixing one acetyl-CoA unit and three malonyl-CoA units. Then one of the cytochrome P450 monooxygenases (apf7 or apf8) may oxidize this backbone to 2-oxooctanoic acid. The aminotransferase apf4 is predicted to catalyze the exchange of the keto group with an amino group. The next step would be the oxidation of 2-aminooctanoic acid by one of the cytochrome P450 monooxygenases (apf7 or apf8). The last step is the oxidation of 2-amino-8-hydroxyoctanoic acid to 2-aminooctanedioic acid is catalyzed by the FAD-dependent monooxygenase apf9. In Gibberella fujikuroi (strain CBS 195.34 / IMI 58289 / NRRL A-6831) (Bakanae and foot rot disease fungus), this protein is Cytochrome P450 monooxygenase apf8.